Consider the following 127-residue polypeptide: Small ribosomal subunit protein uS12 (127 aa).

Asp89 carries the 3-methylthioaspartic acid modification.

The protein belongs to the universal ribosomal protein uS12 family. Part of the 30S ribosomal subunit. Contacts proteins S8 and S17. May interact with IF1 in the 30S initiation complex.

Functionally, with S4 and S5 plays an important role in translational accuracy. Interacts with and stabilizes bases of the 16S rRNA that are involved in tRNA selection in the A site and with the mRNA backbone. Located at the interface of the 30S and 50S subunits, it traverses the body of the 30S subunit contacting proteins on the other side and probably holding the rRNA structure together. The combined cluster of proteins S8, S12 and S17 appears to hold together the shoulder and platform of the 30S subunit. This chain is Small ribosomal subunit protein uS12, found in Campylobacter lari (strain RM2100 / D67 / ATCC BAA-1060).